The chain runs to 1177 residues: Lysylphosphatidylglycerol biosynthesis bifunctional protein LysX (1177 aa).

Disordered regions lie at residues 1–40 (MRRA…AKFV) and 61–85 (VTLA…PRNR). A phosphatidylglycerol lysyltransferase region spans residues 1 to 676 (MRRAGRSRQF…LLHHDGSAPD (676 aa)). Low complexity predominate over residues 65-85 (SPGSRSGSGPRSGPRLGPRNR). 6 helical membrane passes run 93-113 (VPAA…LGSV), 135-155 (FPDT…ALTA), 159-179 (IAWL…VADI), 189-209 (IFGE…LVLA), 227-247 (AVLV…VELF), and 281-301 (VFLN…ATIV). A disordered region spans residues 673-693 (SAPDVSGLRPERTDAEEARSR). The segment at 677 to 1177 (VSGLRPERTD…TLPFPLAKPH (501 aa)) is lysine--tRNA ligase. Basic and acidic residues predominate over residues 681 to 693 (RPERTDAEEARSR). The OB DNA-binding region spans 738–816 (ITVAGRILRI…SLIVTDWRMI (79 aa)). Residues Asp-1089 and Glu-1096 each coordinate Mg(2+).

In the N-terminal section; belongs to the LPG synthetase family. The protein in the C-terminal section; belongs to the class-II aminoacyl-tRNA synthetase family. The cofactor is Mg(2+).

The protein localises to the cell membrane. It carries out the reaction tRNA(Lys) + L-lysine + ATP = L-lysyl-tRNA(Lys) + AMP + diphosphate. The catalysed reaction is L-lysyl-tRNA(Lys) + a 1,2-diacyl-sn-glycero-3-phospho-(1'-sn-glycerol) = a 1,2-diacyl-sn-glycero-3-phospho-1'-(3'-O-L-lysyl)-sn-glycerol + tRNA(Lys). Its function is as follows. Catalyzes the production of L-lysyl-tRNA(Lys)transfer and the transfer of a lysyl group from L-lysyl-tRNA(Lys) to membrane-bound phosphatidylglycerol (PG), which produces lysylphosphatidylglycerol (LPG), one of the components of the bacterial membrane with a positive net charge. LPG synthesis contributes to the resistance to cationic antimicrobial peptides (CAMPs) and likely protects M.tuberculosis against the CAMPs produced by competiting microorganisms (bacteriocins). In fact, the modification of anionic phosphatidylglycerol with positively charged L-lysine results in repulsion of the peptides. This chain is Lysylphosphatidylglycerol biosynthesis bifunctional protein LysX (lysX), found in Mycolicibacterium paratuberculosis (strain ATCC BAA-968 / K-10) (Mycobacterium paratuberculosis).